A 173-amino-acid chain; its full sequence is NAD(P)H-quinone oxidoreductase subunit J (173 aa).

The protein belongs to the complex I 30 kDa subunit family. In terms of assembly, NDH-1 can be composed of about 15 different subunits; different subcomplexes with different compositions have been identified which probably have different functions.

The protein resides in the cellular thylakoid membrane. It catalyses the reaction a plastoquinone + NADH + (n+1) H(+)(in) = a plastoquinol + NAD(+) + n H(+)(out). The enzyme catalyses a plastoquinone + NADPH + (n+1) H(+)(in) = a plastoquinol + NADP(+) + n H(+)(out). Functionally, NDH-1 shuttles electrons from an unknown electron donor, via FMN and iron-sulfur (Fe-S) centers, to quinones in the respiratory and/or the photosynthetic chain. The immediate electron acceptor for the enzyme in this species is believed to be plastoquinone. Couples the redox reaction to proton translocation, and thus conserves the redox energy in a proton gradient. Cyanobacterial NDH-1 also plays a role in inorganic carbon-concentration. The sequence is that of NAD(P)H-quinone oxidoreductase subunit J from Prochlorococcus marinus (strain NATL1A).